Reading from the N-terminus, the 133-residue chain is CDGSH iron-sulfur domain-containing protein 2 homolog (133 aa).

The Lumenal segment spans residues 1 to 35 (MEPISHLVKSSLPNYLSSLPIPDSVGGWFKLSFKD). The helical transmembrane segment at 36–58 (WLALIPPTVVVAGIGYTAYLAYC) threads the bilayer. Residues 59–133 (PAAKAICSAK…DNVGPIVIKK (75 aa)) lie on the Cytoplasmic side of the membrane. [2Fe-2S] cluster-binding residues include Cys100, Cys102, Cys111, and His115.

The protein belongs to the CISD protein family. CISD2 subfamily. The cofactor is [2Fe-2S] cluster.

It localises to the endoplasmic reticulum membrane. This chain is CDGSH iron-sulfur domain-containing protein 2 homolog, found in Drosophila yakuba (Fruit fly).